We begin with the raw amino-acid sequence, 201 residues long: uncharacterized protein (201 aa).

Acidic residues predominate over residues 64-78 (DNEIKEEEESEEEEK). Disordered regions lie at residues 64-114 (DNEI…FKNA) and 182-201 (ILPG…LSKQ). Over residues 96 to 106 (RNKHGRNRNPR) the composition is skewed to basic residues. Positions 189–201 (GNTETVDQGLSKQ) are enriched in polar residues.

This is an uncharacterized protein from Ostreid herpesvirus 1 (isolate France) (OsHV-1).